Reading from the N-terminus, the 374-residue chain is MPHKVSLSRLKLTDFRNYAAASLSLDGRHAVLTGDNGAGKTNLMEAVSLLSPGRGLRRAAYGDITRVGAAGGFSIFAALDGMEGEVEIGTGIEAGEETTARRLRINGTPAKTADELTDHLRLLWLIPAMDGLFTGASSDRRRFLDRLVLSLDPAHGRRASDFERAMRSRNKLLDDGRFDPSWLAGIEEQMASLGIAMALARQEMLGLLTRLTEETLESSPFPSASLQLSGFMDGQFSRPSVDLEDDYRVMLAESRYRDAGAGRTLEGPHRTDLVVHHREKAMEAARCSTGEQKALLVGLVLAHARLVGNLTGHAPILLLDEIAAHLDENRRAALFDIIDGLGGQAFMTGTDRGMFTALGDRAQFFTVADGRVFG.

Gly34–Thr41 is a binding site for ATP.

Belongs to the RecF family.

It localises to the cytoplasm. The RecF protein is involved in DNA metabolism; it is required for DNA replication and normal SOS inducibility. RecF binds preferentially to single-stranded, linear DNA. It also seems to bind ATP. The polypeptide is DNA replication and repair protein RecF (Rhizobium etli (strain ATCC 51251 / DSM 11541 / JCM 21823 / NBRC 15573 / CFN 42)).